The following is a 154-amino-acid chain: Jupiter microtubule associated homolog 1 (154 aa).

An N-acetylmethionine modification is found at methionine 1. Over residues 1–19 (MTTTTTFKGVDPNSRNSSR) the composition is skewed to polar residues. Positions 1–154 (MTTTTTFKGV…PGGKSSLVLG (154 aa)) are disordered. Threonine 2 bears the N-acetylthreonine; in Hematological and neurological expressed 1 protein, N-terminally processed mark. Serine 28 and serine 31 each carry phosphoserine. Over residues 47–59 (MASNIFGTPEENQ) the composition is skewed to polar residues. Threonine 54 is modified (phosphothreonine). Low complexity predominate over residues 60–71 (ASWAKSAGAKSS). Phosphoserine occurs at positions 71, 80, 87, 88, and 92. The span at 80–91 (SGLQRRNSSEAS) shows a compositional bias: polar residues. Over residues 96–108 (LDLKGEGDIHENV) the composition is skewed to basic and acidic residues. Residues 125 to 138 (PAAPVPSPVAPAPV) show a composition bias toward pro residues. Phosphoserine is present on serine 131. Lysine 148 carries the N6-acetyllysine modification.

Belongs to the JUPITER family. As to quaternary structure, interacts with the complex composed, at least, of APC, CTNNB1 and GSK3B; the interaction takes place with the inactive form of GSK3B (phosphorylated at 'Ser-9'). As to expression, expressed in testis, skeletal muscle, thymus, prostate, colon, peripheral blood cells, brain and placenta.

It localises to the nucleus. The protein resides in the cytoplasm. Its function is as follows. Modulates negatively AKT-mediated GSK3B signaling. Induces CTNNB1 'Ser-33' phosphorylation and degradation through the suppression of the inhibitory 'Ser-9' phosphorylation of GSK3B, which represses the function of the APC:CTNNB1:GSK3B complex and the interaction with CDH1/E-cadherin in adherent junctions. Plays a role in the regulation of cell cycle and cell adhesion. Has an inhibitory role on AR-signaling pathway through the induction of receptor proteasomal degradation. The chain is Jupiter microtubule associated homolog 1 from Homo sapiens (Human).